The sequence spans 346 residues: Phosphoribosylformylglycinamidine cyclo-ligase (346 aa).

It belongs to the AIR synthase family.

It is found in the cytoplasm. It catalyses the reaction 2-formamido-N(1)-(5-O-phospho-beta-D-ribosyl)acetamidine + ATP = 5-amino-1-(5-phospho-beta-D-ribosyl)imidazole + ADP + phosphate + H(+). Its pathway is purine metabolism; IMP biosynthesis via de novo pathway; 5-amino-1-(5-phospho-D-ribosyl)imidazole from N(2)-formyl-N(1)-(5-phospho-D-ribosyl)glycinamide: step 2/2. The chain is Phosphoribosylformylglycinamidine cyclo-ligase from Prochlorococcus marinus (strain NATL2A).